We begin with the raw amino-acid sequence, 501 residues long: L-arabinose isomerase (501 aa).

Residues E306, E333, H350, and H450 each contribute to the Mn(2+) site.

The protein belongs to the arabinose isomerase family. In terms of assembly, homohexamer. It depends on Mn(2+) as a cofactor.

The enzyme catalyses beta-L-arabinopyranose = L-ribulose. The protein operates within carbohydrate degradation; L-arabinose degradation via L-ribulose; D-xylulose 5-phosphate from L-arabinose (bacterial route): step 1/3. Its function is as follows. Catalyzes the conversion of L-arabinose to L-ribulose. This Pectobacterium atrosepticum (strain SCRI 1043 / ATCC BAA-672) (Erwinia carotovora subsp. atroseptica) protein is L-arabinose isomerase.